Here is a 325-residue protein sequence, read N- to C-terminus: Tetraacyldisaccharide 4'-kinase (325 aa).

54–61 (SVGGTGKT) provides a ligand contact to ATP.

The protein belongs to the LpxK family.

The catalysed reaction is a lipid A disaccharide + ATP = a lipid IVA + ADP + H(+). It participates in glycolipid biosynthesis; lipid IV(A) biosynthesis; lipid IV(A) from (3R)-3-hydroxytetradecanoyl-[acyl-carrier-protein] and UDP-N-acetyl-alpha-D-glucosamine: step 6/6. In terms of biological role, transfers the gamma-phosphate of ATP to the 4'-position of a tetraacyldisaccharide 1-phosphate intermediate (termed DS-1-P) to form tetraacyldisaccharide 1,4'-bis-phosphate (lipid IVA). This Rickettsia akari (strain Hartford) protein is Tetraacyldisaccharide 4'-kinase.